Reading from the N-terminus, the 23-residue chain is Melittin-related peptide AK-23-1 (23 aa).

Lysine amide is present on K23.

Expressed by the skin glands.

Its subcellular location is the secreted. In Rana arvalis (Moor frog), this protein is Melittin-related peptide AK-23-1.